The chain runs to 59 residues: Large ribosomal subunit protein bL32 (59 aa).

The interval 1–59 (MAVQQNKKSPSKRGMHRSHDALTAPALFVDSTTGEVHRPHHISPNGMYRGRKVVKAKGE) is disordered. Basic residues predominate over residues 49–59 (RGRKVVKAKGE).

It belongs to the bacterial ribosomal protein bL32 family.

The sequence is that of Large ribosomal subunit protein bL32 from Neisseria gonorrhoeae (strain ATCC 700825 / FA 1090).